The chain runs to 612 residues: 1,8-cineole synthase, chloroplastic (612 aa).

A chloroplast-targeting transit peptide spans 1-52 (MALVCGAPLASRSCLNKSLISSTHELKPLRRTILPTLRWKSATPSINMCLTT). Mg(2+) contacts are provided by aspartate 363, aspartate 367, and aspartate 515. A DDXXD motif motif is present at residues 363–367 (DDIYD).

This sequence belongs to the terpene synthase family. Tpsd subfamily. It depends on Mg(2+) as a cofactor. Mn(2+) serves as cofactor.

Its subcellular location is the plastid. It localises to the chloroplast. It carries out the reaction (2E)-geranyl diphosphate + H2O = 1,8-cineole + diphosphate. It functions in the pathway terpene metabolism; oleoresin biosynthesis. Terpene synthase (TPS) involved in the biosynthesis of monoterpene natural products included in conifer oleoresin secretions and volatile emissions; these compounds contribute to biotic and abiotic stress defense against herbivores and pathogens. Catalyzes the conversion of (2E)-geranyl diphosphate (GPP) to 1,8-cineole. In Picea glauca (White spruce), this protein is 1,8-cineole synthase, chloroplastic.